The primary structure comprises 383 residues: Acetylornithine deacetylase (383 aa).

His80 is a binding site for Zn(2+). Asp82 is an active-site residue. Asp112 contributes to the Zn(2+) binding site. Glu144 is a catalytic residue. Zn(2+)-binding residues include Glu145, Glu169, and His355.

Belongs to the peptidase M20A family. ArgE subfamily. As to quaternary structure, homodimer. Zn(2+) serves as cofactor. It depends on Co(2+) as a cofactor. The cofactor is glutathione.

The protein resides in the cytoplasm. It carries out the reaction N(2)-acetyl-L-ornithine + H2O = L-ornithine + acetate. Its pathway is amino-acid biosynthesis; L-arginine biosynthesis; L-ornithine from N(2)-acetyl-L-ornithine (linear): step 1/1. In terms of biological role, catalyzes the hydrolysis of the amide bond of N(2)-acetylated L-amino acids. Cleaves the acetyl group from N-acetyl-L-ornithine to form L-ornithine, an intermediate in L-arginine biosynthesis pathway, and a branchpoint in the synthesis of polyamines. This chain is Acetylornithine deacetylase, found in Escherichia coli O127:H6 (strain E2348/69 / EPEC).